The chain runs to 469 residues: 6-phosphofructo-2-kinase/fructose-2,6-bisphosphatase 4 (469 aa).

The interval Met-1–Pro-249 is 6-phosphofructo-2-kinase. Gly-46–Tyr-54 is a binding site for ATP. Beta-D-fructose 6-phosphate is bound by residues Arg-79 and Arg-103. Residue Asp-129 is part of the active site. Positions 131 and 137 each coordinate beta-D-fructose 6-phosphate. Cys-159 is an active-site residue. Asn-168 to Lys-173 contacts ATP. Beta-D-fructose 6-phosphate is bound by residues Lys-173, Arg-194, and Tyr-198. The segment at Arg-250–Gln-469 is fructose-2,6-bisphosphatase. Arg-256 provides a ligand contact to beta-D-fructose 2,6-bisphosphate. Residue His-257 is the Tele-phosphohistidine intermediate of the active site. Beta-D-fructose 2,6-bisphosphate contacts are provided by Asn-263, Gly-269, and Arg-306. The Proton donor/acceptor role is filled by Glu-326. 6 residues coordinate beta-D-fructose 2,6-bisphosphate: Tyr-337, Arg-351, Lys-355, Tyr-366, Gln-392, and Arg-396. Phe-348 to Arg-351 lines the ATP pocket. Residues Gln-392 to Arg-396 and Tyr-428 contribute to the ATP site. Residue Thr-444 is modified to Phosphothreonine; by PKC.

In the C-terminal section; belongs to the phosphoglycerate mutase family. In terms of assembly, homodimer.

The enzyme catalyses beta-D-fructose 2,6-bisphosphate + H2O = beta-D-fructose 6-phosphate + phosphate. It catalyses the reaction beta-D-fructose 6-phosphate + ATP = beta-D-fructose 2,6-bisphosphate + ADP + H(+). Its activity is regulated as follows. The most important regulatory mechanism of these opposing activities is by phosphorylation and dephosphorylation of the enzyme. In terms of biological role, synthesis and degradation of fructose 2,6-bisphosphate. This is 6-phosphofructo-2-kinase/fructose-2,6-bisphosphatase 4 (PFKFB4) from Macaca fascicularis (Crab-eating macaque).